A 338-amino-acid polypeptide reads, in one-letter code: MAIRIAINGFGRIGRSVLRALYESGRRAEISVVAINELASAEGMAHLLKYDSSHGRFAWDVRQECDSLYVGDDIIRLIHQSEIEQLPWSELGIDVVLDCSGVYGSREDGEAHVASGAKKVLFAHPGGHDLDATVVYGVNHQDLRAEHRIVSNASCTTNCIIPIIQLLDIAYGIESGTVTTIHSSMNDQPVIDAYHQDLRRTRAASQSIIPVDTKLAAGITRIFPKFCDRFEAISVRVPTINVTAIDLSVSVTHPVGVAEVNQLLQKAARGAFRGIVDYTELPLVSMDFNHDPHSAIVDGTQTRVSGQHLIKTLVWCDNEWGFANRMLDTTLAMAKSGF.

12–13 (RI) serves as a coordination point for NAD(+). Substrate-binding positions include 154 to 156 (SCT), arginine 200, 213 to 214 (TK), and arginine 236. Cysteine 155 acts as the Nucleophile in catalysis. Asparagine 318 is an NAD(+) binding site.

Belongs to the glyceraldehyde-3-phosphate dehydrogenase family. Epd subfamily. Homotetramer.

Its subcellular location is the cytoplasm. The catalysed reaction is D-erythrose 4-phosphate + NAD(+) + H2O = 4-phospho-D-erythronate + NADH + 2 H(+). Its pathway is cofactor biosynthesis; pyridoxine 5'-phosphate biosynthesis; pyridoxine 5'-phosphate from D-erythrose 4-phosphate: step 1/5. Functionally, catalyzes the NAD-dependent conversion of D-erythrose 4-phosphate to 4-phosphoerythronate. The protein is D-erythrose-4-phosphate dehydrogenase of Yersinia pestis bv. Antiqua (strain Antiqua).